The following is a 120-amino-acid chain: Large ribosomal subunit protein uL18 (120 aa).

It belongs to the universal ribosomal protein uL18 family. As to quaternary structure, part of the 50S ribosomal subunit; part of the 5S rRNA/L5/L18/L25 subcomplex. Contacts the 5S and 23S rRNAs.

This is one of the proteins that bind and probably mediate the attachment of the 5S RNA into the large ribosomal subunit, where it forms part of the central protuberance. In Brucella suis biovar 1 (strain 1330), this protein is Large ribosomal subunit protein uL18.